Here is a 254-residue protein sequence, read N- to C-terminus: Probable pectate lyase E (254 aa).

An N-terminal signal peptide occupies residues 1–17 (MYQPLLLLPLLLTSAFA). N-linked (GlcNAc...) asparagine glycosylation is present at Asn175. The tract at residues 228 to 254 (DNNKKEPAKKSSGPSNACKYKEPLASC) is disordered.

It belongs to the polysaccharide lyase 3 family. It depends on Ca(2+) as a cofactor.

The protein localises to the secreted. It carries out the reaction Eliminative cleavage of (1-&gt;4)-alpha-D-galacturonan to give oligosaccharides with 4-deoxy-alpha-D-galact-4-enuronosyl groups at their non-reducing ends.. Pectinolytic enzyme consist of four classes of enzymes: pectin lyase, polygalacturonase, pectin methylesterase and rhamnogalacturonase. Among pectinolytic enzymes, pectin lyase is the most important in depolymerization of pectin, since it cleaves internal glycosidic bonds of highly methylated pectins. Favors pectate, the anion, over pectin, the methyl ester. The sequence is that of Probable pectate lyase E (plyE) from Aspergillus fumigatus (strain ATCC MYA-4609 / CBS 101355 / FGSC A1100 / Af293) (Neosartorya fumigata).